Consider the following 315-residue polypeptide: High mobility group protein hmg-12 (315 aa).

Positions 57–315 (VKNETDSEAV…AIDAFFDGSD (259 aa)) are disordered. Polar residues predominate over residues 77–86 (ANDSPANTND). The segment at residues 118-128 (PVKKGRGRPIK) is a DNA-binding region (a.T hook 1). Composition is skewed to low complexity over residues 147–160 (AQTPAADTDAIDTA) and 196–205 (AADTDAIDTA).

It belongs to the HMGA family.

It localises to the nucleus. Transcriptional regulator. Binds to specific sequence motifs in regulatory elements. May recruit transcription factors, or may induce structural changes in chromatin, to thereby modulate embryonic expression of ATP-dependent chaperone cdc-48.1. This Caenorhabditis elegans protein is High mobility group protein hmg-12.